Consider the following 519-residue polypeptide: Spermatocyte protein spe-8 (519 aa).

2 disordered regions span residues 1 to 39 and 73 to 97; these read MSGVELQPESTQSEEKEEPKTAATTISSTEETKTENPNV and NNLKKSASFDSKNQPEDSKTPKQRD. Polar residues predominate over residues 73–84; sequence NNLKKSASFDSK. Basic and acidic residues predominate over residues 85–97; the sequence is NQPEDSKTPKQRD. The 90-residue stretch at 119–208 folds into the SH2 domain; that stretch reads FYHGFMGRTE…PFYDNMTLIC (90 aa). Residues 146–154 and Lys184 contribute to the ATP site; that span reads VGRRVAYVI. Positions 209 to 490 constitute a Protein kinase domain; that stretch reads GLARHEWQLN…KEEAGMHELD (282 aa). The active-site Proton acceptor is the Asp349.

The protein belongs to the protein kinase superfamily. Tyr protein kinase family. Fes/fps subfamily. Expressed in hermaphrodite larvae but not in adult. Expressed in both male larvae and adult.

The protein resides in the cell membrane. Its subcellular location is the cytoplasm. It catalyses the reaction L-tyrosyl-[protein] + ATP = O-phospho-L-tyrosyl-[protein] + ADP + H(+). Probable non-receptor tyrosine-protein kinase which plays a role in spermatid activation (spermiogenesis) in hermaphrodites. The protein is Spermatocyte protein spe-8 of Caenorhabditis briggsae.